We begin with the raw amino-acid sequence, 38 residues long: Large ribosomal subunit protein bL36 (38 aa).

This sequence belongs to the bacterial ribosomal protein bL36 family.

The sequence is that of Large ribosomal subunit protein bL36 from Fervidobacterium nodosum (strain ATCC 35602 / DSM 5306 / Rt17-B1).